The following is a 198-amino-acid chain: NAD(P)H dehydrogenase (quinone) (198 aa).

The Flavodoxin-like domain maps to Ile-4–Val-189. Residues Ser-10 to Ile-15 and Thr-78 to Phe-80 each bind FMN. Tyr-12 is an NAD(+) binding site. A substrate-binding site is contributed by Trp-98. Residues Ser-113–Gly-118 and His-133 contribute to the FMN site.

Belongs to the WrbA family. FMN serves as cofactor.

The catalysed reaction is a quinone + NADH + H(+) = a quinol + NAD(+). It catalyses the reaction a quinone + NADPH + H(+) = a quinol + NADP(+). This is NAD(P)H dehydrogenase (quinone) from Klebsiella pneumoniae (strain 342).